A 385-amino-acid chain; its full sequence is Aspartate carbamoyltransferase 2, chloroplastic (385 aa).

The N-terminal 30 residues, 1-30 (MTASSSLFSCSMHMEVLTPKISKWPKNFVS), are a transit peptide targeting the chloroplast. Carbamoyl phosphate-binding residues include R131 and T132. 2 residues coordinate UMP: R131 and T132. L-aspartate is bound at residue K161. Residues R182, H210, and Q213 each coordinate carbamoyl phosphate. Positions 182 and 210 each coordinate UMP. Positions 243 and 305 each coordinate UMP. Residues R243 and R305 each coordinate L-aspartate. Residues L345 and P346 each coordinate carbamoyl phosphate.

This sequence belongs to the aspartate/ornithine carbamoyltransferase superfamily. ATCase family. As to quaternary structure, homotrimer.

The protein resides in the plastid. The protein localises to the chloroplast. It carries out the reaction carbamoyl phosphate + L-aspartate = N-carbamoyl-L-aspartate + phosphate + H(+). Its pathway is pyrimidine metabolism; UMP biosynthesis via de novo pathway; (S)-dihydroorotate from bicarbonate: step 2/3. Feedback inhibited by UMP. Functionally, catalyzes the condensation of carbamoyl phosphate and aspartate to form carbamoyl aspartate and inorganic phosphate, the committed step in the de novo pyrimidine nucleotide biosynthesis pathway. This chain is Aspartate carbamoyltransferase 2, chloroplastic (PYRB2), found in Pisum sativum (Garden pea).